Here is a 204-residue protein sequence, read N- to C-terminus: Tat proofreading chaperone DmsD (204 aa).

The protein belongs to the TorD/DmsD family. DmsD subfamily.

Required for biogenesis/assembly of DMSO reductase, but not for the interaction of the DmsA signal peptide with the Tat system. May be part of a chaperone cascade complex that facilitates a folding-maturation pathway for the substrate protein. This chain is Tat proofreading chaperone DmsD, found in Escherichia coli O6:H1 (strain CFT073 / ATCC 700928 / UPEC).